A 179-amino-acid polypeptide reads, in one-letter code: uncharacterized protein (179 aa).

A run of 3 helical transmembrane segments spans residues 29-49 (LLGI…GPLI), 76-96 (AKHM…DAYS), and 97-117 (GAII…LLWA).

This sequence belongs to the DP1 family.

The protein localises to the membrane. This is an uncharacterized protein from Encephalitozoon cuniculi (strain GB-M1) (Microsporidian parasite).